A 303-amino-acid polypeptide reads, in one-letter code: UDP-3-O-acyl-N-acetylglucosamine deacetylase (303 aa).

The Zn(2+) site is built by His-78, His-237, and Asp-241. The Proton donor role is filled by His-264.

This sequence belongs to the LpxC family. Requires Zn(2+) as cofactor.

The enzyme catalyses a UDP-3-O-[(3R)-3-hydroxyacyl]-N-acetyl-alpha-D-glucosamine + H2O = a UDP-3-O-[(3R)-3-hydroxyacyl]-alpha-D-glucosamine + acetate. It functions in the pathway glycolipid biosynthesis; lipid IV(A) biosynthesis; lipid IV(A) from (3R)-3-hydroxytetradecanoyl-[acyl-carrier-protein] and UDP-N-acetyl-alpha-D-glucosamine: step 2/6. Its function is as follows. Catalyzes the hydrolysis of UDP-3-O-myristoyl-N-acetylglucosamine to form UDP-3-O-myristoylglucosamine and acetate, the committed step in lipid A biosynthesis. The sequence is that of UDP-3-O-acyl-N-acetylglucosamine deacetylase from Pseudomonas savastanoi pv. phaseolicola (strain 1448A / Race 6) (Pseudomonas syringae pv. phaseolicola (strain 1448A / Race 6)).